The sequence spans 155 residues: Regulatory protein RecX (155 aa).

This sequence belongs to the RecX family.

The protein localises to the cytoplasm. In terms of biological role, modulates RecA activity. This chain is Regulatory protein RecX, found in Pseudomonas entomophila (strain L48).